The sequence spans 76 residues: Large ribosomal subunit protein uL30 (76 aa).

This sequence belongs to the universal ribosomal protein uL30 family. Part of the 50S ribosomal subunit.

This Anaeromyxobacter dehalogenans (strain 2CP-1 / ATCC BAA-258) protein is Large ribosomal subunit protein uL30.